Consider the following 132-residue polypeptide: Peptide methionine sulfoxide reductase MsrB (132 aa).

The 123-residue stretch at 8 to 130 (LDSWREELTE…NSASLKLVPR (123 aa)) folds into the MsrB domain. Residues Cys-47, Cys-50, Cys-96, and Cys-99 each contribute to the Zn(2+) site. The active-site Nucleophile is the Cys-119.

Belongs to the MsrB Met sulfoxide reductase family. It depends on Zn(2+) as a cofactor.

It carries out the reaction L-methionyl-[protein] + [thioredoxin]-disulfide + H2O = L-methionyl-(R)-S-oxide-[protein] + [thioredoxin]-dithiol. The protein is Peptide methionine sulfoxide reductase MsrB of Pseudomonas paraeruginosa (strain DSM 24068 / PA7) (Pseudomonas aeruginosa (strain PA7)).